The following is a 218-amino-acid chain: Hypoxanthine-guanine phosphoribosyltransferase (218 aa).

At alanine 2 the chain carries N-acetylalanine. Lysine 69 lines the GMP pocket. Residue lysine 103 is modified to N6-acetyllysine. A Glycyl lysine isopeptide (Lys-Gly) (interchain with G-Cter in SUMO1); alternate cross-link involves residue lysine 115. Lysine 115 is covalently cross-linked (Glycyl lysine isopeptide (Lys-Gly) (interchain with G-Cter in SUMO2); alternate). Residues 134-142 (EDIIDTGKT), lysine 166, 186-188 (KFV), and aspartate 194 contribute to the GMP site. Aspartate 138 serves as the catalytic Proton acceptor. The residue at position 142 (threonine 142) is a Phosphothreonine. Aspartate 194 serves as a coordination point for Mg(2+).

Belongs to the purine/pyrimidine phosphoribosyltransferase family. As to quaternary structure, homotetramer. The cofactor is Mg(2+).

The protein resides in the cytoplasm. It carries out the reaction IMP + diphosphate = hypoxanthine + 5-phospho-alpha-D-ribose 1-diphosphate. The catalysed reaction is GMP + diphosphate = guanine + 5-phospho-alpha-D-ribose 1-diphosphate. The protein operates within purine metabolism; IMP biosynthesis via salvage pathway; IMP from hypoxanthine: step 1/1. Converts guanine to guanosine monophosphate, and hypoxanthine to inosine monophosphate. Transfers the 5-phosphoribosyl group from 5-phosphoribosylpyrophosphate onto the purine. Plays a central role in the generation of purine nucleotides through the purine salvage pathway. This is Hypoxanthine-guanine phosphoribosyltransferase (HPRT1) from Pan troglodytes (Chimpanzee).